A 447-amino-acid polypeptide reads, in one-letter code: Putative branched-chain amino acid carrier protein SERP0977 (447 aa).

Transmembrane regions (helical) follow at residues threonine 5–proline 25, isoleucine 40–leucine 60, proline 74–isoleucine 94, glycine 114–leucine 134, isoleucine 143–phenylalanine 163, glycine 193–isoleucine 213, isoleucine 229–isoleucine 249, leucine 290–valine 310, isoleucine 317–leucine 337, valine 350–alanine 370, isoleucine 382–isoleucine 402, and leucine 417–valine 437.

Belongs to the branched chain amino acid transporter family.

It is found in the cell membrane. In terms of biological role, component of the transport system for branched-chain amino acids (leucine, isoleucine and valine), which is coupled to a proton motive force. This is Putative branched-chain amino acid carrier protein SERP0977 from Staphylococcus epidermidis (strain ATCC 35984 / DSM 28319 / BCRC 17069 / CCUG 31568 / BM 3577 / RP62A).